The following is a 364-amino-acid chain: Aminomethyltransferase (364 aa).

This sequence belongs to the GcvT family. As to quaternary structure, the glycine cleavage system is composed of four proteins: P, T, L and H.

The catalysed reaction is N(6)-[(R)-S(8)-aminomethyldihydrolipoyl]-L-lysyl-[protein] + (6S)-5,6,7,8-tetrahydrofolate = N(6)-[(R)-dihydrolipoyl]-L-lysyl-[protein] + (6R)-5,10-methylene-5,6,7,8-tetrahydrofolate + NH4(+). In terms of biological role, the glycine cleavage system catalyzes the degradation of glycine. The chain is Aminomethyltransferase from Shewanella sediminis (strain HAW-EB3).